The sequence spans 499 residues: Cytochrome P450 71A27 (499 aa).

A helical membrane pass occupies residues 3–23 (MILISLCLTTLLAFLFLKPLL). Cys438 lines the heme pocket.

The protein belongs to the cytochrome P450 family. Heme serves as cofactor.

The protein localises to the membrane. This chain is Cytochrome P450 71A27 (CYP71A27), found in Arabidopsis thaliana (Mouse-ear cress).